The following is a 241-amino-acid chain: Probable WRKY transcription factor 63 (241 aa).

Residues 56 to 79 form a disordered region; it reads NSPNRQPHHESSSRDMAGLVPQRS. The WRKY DNA-binding region spans 97–165; the sequence is SPNPRLDDGF…YLGQHTCKAF (69 aa).

This sequence belongs to the WRKY group III family.

It is found in the nucleus. Functionally, transcription factor. Interacts specifically with the W box (5'-(T)TGAC[CT]-3'), a frequently occurring elicitor-responsive cis-acting element. The chain is Probable WRKY transcription factor 63 (WRKY63) from Arabidopsis thaliana (Mouse-ear cress).